Reading from the N-terminus, the 92-residue chain is MISPNRQGIVVWLTSLKYARQLRRFGHVQYVSKKMKYVVFYCDQSKVPELVDKLSSFHFVTDVKPSMRPFINTEYEGAKPDKAKEYDYKLGI.

This sequence belongs to the UPF0298 family.

It is found in the cytoplasm. The polypeptide is UPF0298 protein ABC2380 (Shouchella clausii (strain KSM-K16) (Alkalihalobacillus clausii)).